A 1673-amino-acid polypeptide reads, in one-letter code: AF4/FMR2 family member lilli (1673 aa).

Disordered regions lie at residues 1 to 24, 54 to 80, 125 to 302, 407 to 534, 575 to 604, 722 to 1086, 1114 to 1133, 1141 to 1160, and 1187 to 1315; these read MAQQQQQQMQQQQQHHTSSINNNN, YSQNYNMEEYERRKRREREKIERQQGI, SRSA…PPEK, QLPP…GAQN, VGTGSGSGGTLSSGGSSSNKTPSPTESNKW, RLSD…INTL, QGKLDAAAQPSAPQAPPAAP, RMTPTQQQQLGAGLASPART, and KLTP…MGKE. Positions 71 to 80 are enriched in basic and acidic residues; that stretch reads REKIERQQGI. Composition is skewed to low complexity over residues 146–180 and 223–244; these read SLGHSPSSASSAAGPTAASATTSLPGQQQHYQQQQ and PRTSSSNSNSSSVTNNASSGGV. A Phosphothreonine modification is found at T420. The span at 428–441 shows a compositional bias: basic and acidic residues; that stretch reads LKTEKNHSLEKQDS. A compositionally biased stretch (acidic residues) spans 443–454; sequence LENDLELSESED. Phosphoserine occurs at positions 450 and 452. Over residues 465-486 the composition is skewed to low complexity; sequence GNSSNSSESDSSESGSESSSKN. Over residues 491 to 500 the composition is skewed to basic residues; it reads HPNHQQHHHQ. Residues 501–525 are compositionally biased toward low complexity; it reads LQQQQQQQQATMQQQQVLQQQHRSQ. Gly residues predominate over residues 577–586; the sequence is TGSGSGGTLS. Polar residues predominate over residues 594 to 604; sequence KTPSPTESNKW. A compositionally biased stretch (low complexity) spans 724-757; the sequence is SDSGTSASGSSSSSSSSSDSAMGGEVVPMPGPGE. The segment covering 775-788 has biased composition (polar residues); the sequence is QPTQSQKAPPSNSV. Over residues 802 to 812 the composition is skewed to basic residues; sequence QRQKKPRKKKA. 2 positions are modified to phosphoserine: S821 and S822. The segment at residues 851–863 is a DNA-binding region (a.T hook); it reads KKGRGRPRKQQQS. Residues 860–898 show a composition bias toward low complexity; it reads QQQSGGSGNLSSASAGSSSQTKGPTLTAAKKPLAKTPLA. A phosphoserine mark is found at S871 and S873. Over residues 909 to 919 the composition is skewed to polar residues; the sequence is SQSSSNGNTPT. 2 stretches are compositionally biased toward low complexity: residues 949–965 and 993–1004; these read SSSAESSSKSSSSSSSS and GSGSSSPSSSGS. Polar residues predominate over residues 1011–1022; the sequence is TRSQVGSGQALA. A compositionally biased stretch (low complexity) spans 1034–1060; that stretch reads SQHSQHLSSSDCSSSSGGCTAVCSSSS. A compositionally biased stretch (basic and acidic residues) spans 1065-1082; that stretch reads EGRREKERERKPKSDKNK. The span at 1190-1205 shows a compositional bias: polar residues; sequence PAQQNGHLTPKDQATN. Basic and acidic residues-rich tracts occupy residues 1226–1243 and 1252–1282; these read EHPVKPEPELDAGYEAKF and FQLKQERDRDRERERERERERERDREREQPP. S1362 bears the Phosphoserine mark. T1364 is subject to Phosphothreonine. The segment covering 1564–1583 has biased composition (low complexity); it reads NTPSSISPSNSVGSQGSGSN. Positions 1564–1588 are disordered; the sequence is NTPSSISPSNSVGSQGSGSNTPPGR.

The protein belongs to the AF4 family. In terms of assembly, component of the super elongation complex (SEC), at least composed of Ell, Cdk9, cyclin-T (CycT), lilli and ear.

The protein localises to the nucleus. In terms of biological role, has a role in transcriptional regulation. Acts in parallel with the Ras/MAPK and the PI3K/PKB pathways in the control of cell identity and cellular growth. Essential for regulation of the cytoskeleton and cell growth but not for cell proliferation or growth rate. Required specifically for the microtubule-based basal transport of lipid droplets. Plays a partially redundant function downstream of Raf in cell fate specification in the developing eye. Pair-rule protein that regulates embryonic cellularization, gastrulation and segmentation. In Drosophila melanogaster (Fruit fly), this protein is AF4/FMR2 family member lilli.